The chain runs to 220 residues: Deoxyribose-phosphate aldolase (220 aa).

D89 acts as the Proton donor/acceptor in catalysis. K151 acts as the Schiff-base intermediate with acetaldehyde in catalysis. The active-site Proton donor/acceptor is K180.

The protein belongs to the DeoC/FbaB aldolase family. DeoC type 1 subfamily.

The protein localises to the cytoplasm. The catalysed reaction is 2-deoxy-D-ribose 5-phosphate = D-glyceraldehyde 3-phosphate + acetaldehyde. It functions in the pathway carbohydrate degradation; 2-deoxy-D-ribose 1-phosphate degradation; D-glyceraldehyde 3-phosphate and acetaldehyde from 2-deoxy-alpha-D-ribose 1-phosphate: step 2/2. Catalyzes a reversible aldol reaction between acetaldehyde and D-glyceraldehyde 3-phosphate to generate 2-deoxy-D-ribose 5-phosphate. This is Deoxyribose-phosphate aldolase from Deinococcus radiodurans (strain ATCC 13939 / DSM 20539 / JCM 16871 / CCUG 27074 / LMG 4051 / NBRC 15346 / NCIMB 9279 / VKM B-1422 / R1).